The following is a 430-amino-acid chain: tRNA(Ile)-lysidine synthase (430 aa).

Residue 21–26 (SGGLDS) participates in ATP binding.

It belongs to the tRNA(Ile)-lysidine synthase family.

The protein localises to the cytoplasm. The enzyme catalyses cytidine(34) in tRNA(Ile2) + L-lysine + ATP = lysidine(34) in tRNA(Ile2) + AMP + diphosphate + H(+). Ligates lysine onto the cytidine present at position 34 of the AUA codon-specific tRNA(Ile) that contains the anticodon CAU, in an ATP-dependent manner. Cytidine is converted to lysidine, thus changing the amino acid specificity of the tRNA from methionine to isoleucine. The chain is tRNA(Ile)-lysidine synthase from Salmonella agona (strain SL483).